Consider the following 182-residue polypeptide: UPF0397 protein BA_2640/GBAA_2640/BAS2460 (182 aa).

5 helical membrane-spanning segments follow: residues 9–29, 40–60, 71–91, 114–134, and 142–162; these read VVAIGIGSALYGILGLWGFSI, AILTVFGALFGPVAGLLIGLI, WSIWWGWVISSGIIGFTMGFI, ITGLIGIVIAIIFAGAFDIIV, and IVIQVLGATIADVIVFLVLGL.

This sequence belongs to the UPF0397 family.

It is found in the cell membrane. In Bacillus anthracis, this protein is UPF0397 protein BA_2640/GBAA_2640/BAS2460.